Consider the following 409-residue polypeptide: MMKKNNSTKRGPQDGNHQCAPPEKVGWVRKFCGKGIFREIWKNRYVVLKGDQLYISEKEVKDEKNIQEVFDLSDYEKCEELRKSKSRSKKNHSKFTLAHSKQPGNTAPNLIFLAVSPEEKESWINALNSAITRAKNRVLDEVTVEEDSYLAHPTRDRAKIQHSRRPPTRGHLMAVASTSTSDGMLTLDLIQEEDPSPEEPTSCAESFRVDLDKSVAQLAGSRRRADSDRIQPSSDRASGLPRLWEKPDKGATYTPQAPKKLTATEKSRCASLEEILSQRDAVPAHTLQRRAEDPPTPIPHAPGQLSRIQDLVARKLEKTQELLAEVQGLGDGKRKAKEPPRSPPDSESEQLLLETERLLGEASSNWSQAKRVLQEVRELRDLYRQMDLQTPDSHLRQTTQHSQYRKSLM.

The disordered stretch occupies residues 1 to 20 (MMKKNNSTKRGPQDGNHQCA). One can recognise a PH domain in the interval 21 to 132 (PPEKVGWVRK…WINALNSAIT (112 aa)). Residues 133-193 (RAKNRVLDEV…MLTLDLIQEE (61 aa)) are interaction with capping proteins (CPs). Positions 136 to 308 (NRVLDEVTVE…PHAPGQLSRI (173 aa)) are interaction with ATM, CKIP, IFP35 and NMI. 3 disordered regions span residues 218-304 (LAGS…APGQ), 325-350 (EVQG…ESEQ), and 390-409 (TPDS…KSLM). 2 positions are modified to phosphoserine: S227 and S271. The negative regulator of AP-1 activity stretch occupies residues 308-409 (IQDLVARKLE…QHSQYRKSLM (102 aa)). Over residues 331-340 (DGKRKAKEPP) the composition is skewed to basic and acidic residues. S342 carries the post-translational modification Phosphoserine. Residues 390–402 (TPDSHLRQTTQHS) are compositionally biased toward polar residues.

As to quaternary structure, heterodimer or homodimer. Interacts with CK2 and actin capping subunits (capping protein CP-alpha and CP-beta). CKIP1 and CK2 together inhibit the activity of actin capping protein at the barbed ends of actin filaments. Interacts with ATM, IFP35, JUN, JUND, NMI and PI3K. Interacts with AKT1, AKT2 and AKT3 (each isozyme of PKB), PtdIns(3,5)P2, PtdIns(4,5)P2 and PtdIns(3,4,5)P2. In terms of processing, C-terminal fragments could be released during apoptosis via caspase-3-dependent cleavage.

Its subcellular location is the membrane. The protein localises to the nucleus. It is found in the cytoplasm. Its function is as follows. Plays a role in the regulation of the actin cytoskeleton through its interactions with actin capping protein (CP). May function to target CK2 to the plasma membrane thereby serving as an adapter to facilitate the phosphorylation of CP by protein kinase 2 (CK2). Appears to target ATM to the plasma membrane. Also implicated in PI3K-regulated muscle differentiation, the regulation of AP-1 activity (plasma membrane bound AP-1 regulator that translocates to the nucleus) and the promotion of apoptosis induced by tumor necrosis factor TNF. When bound to PKB, it inhibits it probably by decreasing PKB level of phosphorylation. The protein is Pleckstrin homology domain-containing family O member 1 (PLEKHO1) of Bos taurus (Bovine).